Consider the following 78-residue polypeptide: Small ribosomal subunit protein bS18 (78 aa).

This sequence belongs to the bacterial ribosomal protein bS18 family. Part of the 30S ribosomal subunit. Forms a tight heterodimer with protein bS6.

In terms of biological role, binds as a heterodimer with protein bS6 to the central domain of the 16S rRNA, where it helps stabilize the platform of the 30S subunit. The protein is Small ribosomal subunit protein bS18 of Beutenbergia cavernae (strain ATCC BAA-8 / DSM 12333 / CCUG 43141 / JCM 11478 / NBRC 16432 / NCIMB 13614 / HKI 0122).